Here is a 294-residue protein sequence, read N- to C-terminus: Agamous-like MADS-box protein AGL82 (294 aa).

Residues 1 to 51 (MVPKVVDLQRIANDKTRITTYKKRKASLYKKAQEFSTLCGVETCLIVYGPT) form the MADS-box domain.

As to quaternary structure, interacts with MEE14/CBP1.

The protein resides in the nucleus. In terms of biological role, probable transcription factor that may function in the maintenance of the proper function of the central cell in pollen tube attraction. The polypeptide is Agamous-like MADS-box protein AGL82 (Arabidopsis thaliana (Mouse-ear cress)).